Consider the following 140-residue polypeptide: Acyl-coenzyme A thioesterase 13 (140 aa).

The residue at position 1 (methionine 1) is an N-acetylmethionine. Threonine 2 carries the post-translational modification N-acetylthreonine; in Acyl-coenzyme A thioesterase 13, N-terminally processed. Lysine 27, lysine 37, and lysine 43 each carry N6-acetyllysine. Glutamate 46 serves as a coordination point for CoA. Substrate is bound by residues asparagine 50 and glycine 81. Residues serine 83, tyrosine 90 to lysine 95, and lysine 108 to leucine 113 contribute to the CoA site. An N6-acetyllysine mark is found at lysine 108 and lysine 127. Histidine 137 contacts CoA.

Belongs to the thioesterase PaaI family. In terms of assembly, homotetramer. Interacts with PCTP.

It localises to the cytoplasm. The protein localises to the cytosol. The protein resides in the mitochondrion. It is found in the nucleus. Its subcellular location is the cytoskeleton. It localises to the spindle. It catalyses the reaction a fatty acyl-CoA + H2O = a fatty acid + CoA + H(+). The enzyme catalyses decanoyl-CoA + H2O = decanoate + CoA + H(+). The catalysed reaction is octanoyl-CoA + H2O = octanoate + CoA + H(+). It carries out the reaction butanoyl-CoA + H2O = butanoate + CoA + H(+). It catalyses the reaction hexanoyl-CoA + H2O = hexanoate + CoA + H(+). The enzyme catalyses tetradecanoyl-CoA + H2O = tetradecanoate + CoA + H(+). The catalysed reaction is hexadecanoyl-CoA + H2O = hexadecanoate + CoA + H(+). It carries out the reaction dodecanoyl-CoA + H2O = dodecanoate + CoA + H(+). It catalyses the reaction (9Z)-octadecenoyl-CoA + H2O = (9Z)-octadecenoate + CoA + H(+). The enzyme catalyses (5Z,8Z,11Z,14Z)-eicosatetraenoyl-CoA + H2O = (5Z,8Z,11Z,14Z)-eicosatetraenoate + CoA + H(+). Its function is as follows. Catalyzes the hydrolysis of acyl-CoAs into free fatty acids and coenzyme A (CoASH), regulating their respective intracellular levels. Has acyl-CoA thioesterase activity towards medium (C12) and long-chain (C18) fatty acyl-CoA substrates. Can also hydrolyze 3-hydroxyphenylacetyl-CoA and 3,4-dihydroxyphenylacetyl-CoA (in vitro). May play a role in controlling adaptive thermogenesis. This Homo sapiens (Human) protein is Acyl-coenzyme A thioesterase 13.